The sequence spans 326 residues: Cyclin-dependent kinase 1 (326 aa).

The 291-residue stretch at 16–306 (FTKLEKIGEG…SKKALHHPYF (291 aa)) folds into the Protein kinase domain. ATP is bound by residues 22–30 (IGEGTYGVV) and Lys-45. Catalysis depends on Asp-140, which acts as the Proton acceptor.

It belongs to the protein kinase superfamily. CMGC Ser/Thr protein kinase family. CDC2/CDKX subfamily. In terms of assembly, forms a stable but non-covalent complex with a regulatory subunit and with a cyclin. Interacts with cks-1.

It localises to the nucleus. It is found in the cytoplasm. The protein resides in the cytoskeleton. Its subcellular location is the microtubule organizing center. The protein localises to the centrosome. The enzyme catalyses L-seryl-[protein] + ATP = O-phospho-L-seryl-[protein] + ADP + H(+). The catalysed reaction is L-threonyl-[protein] + ATP = O-phospho-L-threonyl-[protein] + ADP + H(+). It carries out the reaction [DNA-directed RNA polymerase] + ATP = phospho-[DNA-directed RNA polymerase] + ADP + H(+). Its activity is regulated as follows. Phosphorylation both activates and inactivates the enzyme depending on the site of phosphorylation. Functionally, plays a key role in the control of the eukaryotic cell cycle. Required for entry into S-phase and mitosis. Acts as a component of the kinase complex that phosphorylates the repetitive C-terminus of RNA polymerase II. May function in concert with npp-16 to arrest prophase blastomeres in response to anoxia. This is Cyclin-dependent kinase 1 from Caenorhabditis briggsae.